The chain runs to 881 residues: Envelope glycoprotein gp160 (881 aa).

Positions 1 to 19 (MGCLGNQLLIAILLLSVYG) are cleaved as a signal peptide. Residues 20-696 (IYCTQYVTVF…ASWIKYIQYG (677 aa)) lie on the Extracellular side of the membrane. N-linked (GlcNAc...) asparagine; by host glycosylation occurs at Asn-37. A disulfide bridge links Cys-44 with Cys-57. N-linked (GlcNAc...) asparagine; by host glycosylation is found at Asn-70, Asn-114, Asn-148, Asn-158, Asn-186, Asn-200, Asn-204, Asn-214, Asn-246, Asn-249, Asn-280, Asn-286, Asn-297, Asn-308, Asn-318, Asn-373, and Asn-379. Disulfide bonds link Cys-101–Cys-222, Cys-108–Cys-213, Cys-113–Cys-170, Cys-235–Cys-265, and Cys-245–Cys-257. Residues 113–169 (CNKSETDRWGLTKSSTTITTAAPTSAPVSEKIDMVNETSSCIAQNNCTGLEQEQMIS) form a V1 region. A V2 region spans residues 170 to 213 (CKFTMTGLKRDKTKEYNETWYSTDLVCEQGNSTDNESRCYMNHC). The tract at residues 313–345 (CRRPGNKTVLPVTIMSGLVFHSQPINDRPKQAW) is V3. Residues Cys-313 and Cys-346 are joined by a disulfide bond. Disulfide bonds link Cys-397/Cys-461 and Cys-404/Cys-434. Residues 404 to 434 (CKMNWFLNWVEDRDVTTQRPKERHRRNYVPC) form a V4 region. Residues Asn-462 and Asn-478 are each glycosylated (N-linked (GlcNAc...) asparagine; by host). The tract at residues 477 to 484 (GNQTSITM) is V5. Positions 528–548 (GVFVLGFLGFLATAGSAMGAA) are fusion peptide. An immunosuppression region spans residues 591–607 (LQTRVTAIEKYLKDQAQ). Residues Asn-627, Asn-636, and Asn-652 are each glycosylated (N-linked (GlcNAc...) asparagine; by host). Residues 636-668 (NDTWQEWERKVDFLEENITALLEEAQIQQEKNM) are a coiled coil. An MPER; binding to GalCer region spans residues 673 to 694 (KLNSWDVFGNWFDLASWIKYIQ). Residues 697 to 717 (IYVVVGVILLRIVIYIVQMLA) form a helical membrane-spanning segment. Over 718–881 (KLRQGYRPVF…IRQGLELTLL (164 aa)) the chain is Cytoplasmic. The YXXV motif; contains endocytosis signal signature appears at 723 to 726 (YRPV). Residues 737–761 (THTQQDPALPTREGKEGDGGEGGGN) are disordered. Cys-789 carries the S-palmitoyl cysteine; by host lipid modification. Positions 880–881 (LL) match the Di-leucine internalization motif motif.

In terms of assembly, the mature envelope protein (Env) consists of a homotrimer of non-covalently associated gp120-gp41 heterodimers. The resulting complex protrudes from the virus surface as a spike. Interacts with host CD4 and CCR5. Gp120 also interacts with the C-type lectins CD209/DC-SIGN and CLEC4M/DC-SIGNR (collectively referred to as DC-SIGN(R)). As to quaternary structure, the mature envelope protein (Env) consists of a homotrimer of non-covalently associated gp120-gp41 heterodimers. The resulting complex protrudes from the virus surface as a spike. Specific enzymatic cleavages in vivo yield mature proteins. Envelope glycoproteins are synthesized as an inactive precursor that is heavily N-glycosylated and processed likely by host cell furin in the Golgi to yield the mature SU and TM proteins. The cleavage site between SU and TM requires the minimal sequence [KR]-X-[KR]-R. Post-translationally, palmitoylation of the transmembrane protein and of Env polyprotein (prior to its proteolytic cleavage) is essential for their association with host cell membrane lipid rafts. Palmitoylation is therefore required for envelope trafficking to classical lipid rafts, but not for viral replication.

It is found in the virion membrane. The protein localises to the host cell membrane. It localises to the host endosome membrane. The surface protein gp120 (SU) attaches the virus to the host lymphoid cell by binding to the primary receptor CD4. This interaction induces a structural rearrangement creating a high affinity binding site for a chemokine coreceptor like CCR5. This peculiar 2 stage receptor-interaction strategy allows gp120 to maintain the highly conserved coreceptor-binding site in a cryptic conformation, protected from neutralizing antibodies. These changes are transmitted to the transmembrane protein gp41 and are thought to activate its fusogenic potential by unmasking its fusion peptide. Functionally, surface protein gp120 (SU) may target the virus to gut-associated lymphoid tissue (GALT) by binding host ITGA4/ITGB7 (alpha-4/beta-7 integrins), a complex that mediates T-cell migration to the GALT. Interaction between gp120 and ITGA4/ITGB7 would allow the virus to enter GALT early in the infection, infecting and killing most of GALT's resting CD4+ T-cells. This T-cell depletion is believed to be the major insult to the host immune system leading to AIDS. Its function is as follows. The surface protein gp120 is a ligand for CD209/DC-SIGN and CLEC4M/DC-SIGNR, which are respectively found on dendritic cells (DCs), and on endothelial cells of liver sinusoids and lymph node sinuses. These interactions allow capture of viral particles at mucosal surfaces by these cells and subsequent transmission to permissive cells. DCs are professional antigen presenting cells, critical for host immunity by inducing specific immune responses against a broad variety of pathogens. They act as sentinels in various tissues where they take up antigen, process it, and present it to T-cells following migration to lymphoid organs. SIV subverts the migration properties of dendritic cells to gain access to CD4+ T-cells in lymph nodes. Virus transmission to permissive T-cells occurs either in trans (without DCs infection, through viral capture and transmission), or in cis (following DCs productive infection, through the usual CD4-gp120 interaction), thereby inducing a robust infection. In trans infection, bound virions remain infectious over days and it is proposed that they are not degraded, but protected in non-lysosomal acidic organelles within the DCs close to the cell membrane thus contributing to the viral infectious potential during DCs' migration from the periphery to the lymphoid tissues. On arrival at lymphoid tissues, intact virions recycle back to DCs' cell surface allowing virus transmission to CD4+ T-cells. Virion capture also seems to lead to MHC-II-restricted viral antigen presentation, and probably to the activation of SIV-specific CD4+ cells. In terms of biological role, the transmembrane protein gp41 (TM) acts as a class I viral fusion protein. Under the current model, the protein has at least 3 conformational states: pre-fusion native state, pre-hairpin intermediate state, and post-fusion hairpin state. During fusion of viral and target intracellular membranes, the coiled coil regions (heptad repeats) assume a trimer-of-hairpins structure, positioning the fusion peptide in close proximity to the C-terminal region of the ectodomain. The formation of this structure appears to drive apposition and subsequent fusion of viral and target cell membranes. Complete fusion occurs in host cell endosomes. The virus undergoes clathrin-dependent internalization long before endosomal fusion, thus minimizing the surface exposure of conserved viral epitopes during fusion and reducing the efficacy of inhibitors targeting these epitopes. Membranes fusion leads to delivery of the nucleocapsid into the cytoplasm. The envelope glycoprotein gp160 precursor down-modulates cell surface CD4 antigen by interacting with it in the endoplasmic reticulum and blocking its transport to the cell surface. Functionally, the gp120-gp41 heterodimer allows rapid transcytosis of the virus through CD4 negative cells such as simple epithelial monolayers of the intestinal, rectal and endocervical epithelial barriers. Both gp120 and gp41 specifically recognize glycosphingolipids galactosyl-ceramide (GalCer) or 3' sulfo-galactosyl-ceramide (GalS) present in the lipid rafts structures of epithelial cells. Binding to these alternative receptors allows the rapid transcytosis of the virus through the epithelial cells. This transcytotic vesicle-mediated transport of virions from the apical side to the basolateral side of the epithelial cells does not involve infection of the cells themselves. The sequence is that of Envelope glycoprotein gp160 (env) from Cercopithecidae (Old World monkeys).